Consider the following 284-residue polypeptide: Nucleotide-binding protein Shal_3708 (284 aa).

Residue 8–15 (GRSGSGKS) participates in ATP binding. 56-59 (DIRN) provides a ligand contact to GTP.

Belongs to the RapZ-like family.

Its function is as follows. Displays ATPase and GTPase activities. In Shewanella halifaxensis (strain HAW-EB4), this protein is Nucleotide-binding protein Shal_3708.